Here is a 318-residue protein sequence, read N- to C-terminus: Leucine-rich repeat domain-containing protein YddK (318 aa).

9 LRR repeats span residues 109–129 (NFTS…TNYD), 130–151 (RLVK…QGRN), 153–173 (SITH…DRLS), 174–194 (SVTY…ESCE), 195–216 (WLQY…NKNE), 217–237 (LLLL…LFPN), 238–258 (LNTL…YSNF), 260–280 (NVQT…DFLT), and 284–305 (SIKS…NTSD).

This Escherichia coli (strain K12) protein is Leucine-rich repeat domain-containing protein YddK (yddK).